Consider the following 202-residue polypeptide: Coiled-coil domain-containing protein 85B (202 aa).

Position 1 is an N-acetylmethionine (Met1). Coiled coils occupy residues 43–90 (GRLM…ERQR) and 118–147 (QKLA…LGEE). The disordered stretch occupies residues 148–202 (WGPRGGPSGAGGSGAGPAPELALPPCGPRDLGDGSSSTGSVGSPDQLPLACSPDD). Residues 150–162 (PRGGPSGAGGSGA) are compositionally biased toward gly residues. Positions 180-190 (DGSSSTGSVGS) are enriched in low complexity.

The protein belongs to the CCDC85 family. In terms of assembly, interacts with CEBPB. Interacts with EURL. May interact with CEBPD. Interacts with MCRS1. Interacts with TCF7L2; competes with CTNNB1. Interacts with ANKRD26. Interacts with the beta-catenin family proteins ARVCF, CTNND1, CTNND2 and PKP4. As to quaternary structure, (Microbial infection) Interacts with the viral phosphoprotein hepatitis delta antigen (HDAG); this interaction affects hepatitis delta virus (HDV) genomic replication in intact cells. Widely expressed including liver.

The protein resides in the nucleus. Its subcellular location is the cytoplasm. The protein localises to the cytoskeleton. It localises to the microtubule organizing center. It is found in the centrosome. The protein resides in the cell junction. Its subcellular location is the adherens junction. Functionally, functions as a transcriptional repressor. May inhibit the activity of CTNNB1 in a TP53-dependent manner and thus regulate cell growth. May function in adipocyte differentiation, negatively regulating mitotic clonal expansion. Plays a role in cell-cell adhesion and epithelium development through its interaction with proteins of the beta-catenin family. In terms of biological role, (Microbial infection) Plays a role in hepatitis delta virus (HDV) genomic replication. This Homo sapiens (Human) protein is Coiled-coil domain-containing protein 85B (CCDC85B).